Consider the following 276-residue polypeptide: Formamidopyrimidine-DNA glycosylase (276 aa).

Pro2 acts as the Schiff-base intermediate with DNA in catalysis. The active-site Proton donor is the Glu3. Residue Lys58 is the Proton donor; for beta-elimination activity of the active site. Residues His92, Arg111, and Arg153 each contribute to the DNA site. Residues 238-272 (TVYGRERQNCLNCSSTIIKTKHSGRSTFYCRTCQY) form an FPG-type zinc finger. Arg262 functions as the Proton donor; for delta-elimination activity in the catalytic mechanism.

This sequence belongs to the FPG family. As to quaternary structure, monomer. Requires Zn(2+) as cofactor.

It catalyses the reaction Hydrolysis of DNA containing ring-opened 7-methylguanine residues, releasing 2,6-diamino-4-hydroxy-5-(N-methyl)formamidopyrimidine.. It carries out the reaction 2'-deoxyribonucleotide-(2'-deoxyribose 5'-phosphate)-2'-deoxyribonucleotide-DNA = a 3'-end 2'-deoxyribonucleotide-(2,3-dehydro-2,3-deoxyribose 5'-phosphate)-DNA + a 5'-end 5'-phospho-2'-deoxyribonucleoside-DNA + H(+). Functionally, involved in base excision repair of DNA damaged by oxidation or by mutagenic agents. Acts as a DNA glycosylase that recognizes and removes damaged bases. Has a preference for oxidized purines, such as 7,8-dihydro-8-oxoguanine (8-oxoG). Has AP (apurinic/apyrimidinic) lyase activity and introduces nicks in the DNA strand. Cleaves the DNA backbone by beta-delta elimination to generate a single-strand break at the site of the removed base with both 3'- and 5'-phosphates. In Rickettsia felis (strain ATCC VR-1525 / URRWXCal2) (Rickettsia azadi), this protein is Formamidopyrimidine-DNA glycosylase.